The following is a 331-amino-acid chain: Elongation factor Ts, mitochondrial (331 aa).

A mitochondrion-targeting transit peptide spans 1 to 14 (MIVSRQVIRSVVRK).

The protein belongs to the EF-Ts family.

The protein resides in the mitochondrion. Functionally, associates with the EF-Tu.GDP complex and induces the exchange of GDP to GTP. It remains bound to the aminoacyl-tRNA.EF-Tu.GTP complex up to the GTP hydrolysis stage on the ribosome. This chain is Elongation factor Ts, mitochondrial, found in Brugia malayi (Filarial nematode worm).